A 425-amino-acid polypeptide reads, in one-letter code: Dihydroorotase (425 aa).

2 residues coordinate Zn(2+): His59 and His61. Substrate contacts are provided by residues 61–63 (HLR) and Asn93. Zn(2+)-binding residues include Asp151, His178, and His231. Asn277 lines the substrate pocket. Asp304 is a Zn(2+) binding site. Asp304 is a catalytic residue. Substrate is bound by residues His308 and 322-323 (FG).

Belongs to the metallo-dependent hydrolases superfamily. DHOase family. Class I DHOase subfamily. Zn(2+) is required as a cofactor.

It carries out the reaction (S)-dihydroorotate + H2O = N-carbamoyl-L-aspartate + H(+). It participates in pyrimidine metabolism; UMP biosynthesis via de novo pathway; (S)-dihydroorotate from bicarbonate: step 3/3. Its function is as follows. Catalyzes the reversible cyclization of carbamoyl aspartate to dihydroorotate. The chain is Dihydroorotase from Staphylococcus epidermidis (strain ATCC 12228 / FDA PCI 1200).